Reading from the N-terminus, the 335-residue chain is Holliday junction branch migration complex subunit RuvB (335 aa).

The segment at 1-183 is large ATPase domain (RuvB-L); the sequence is MDERIISSET…FGVIDHLEFY (183 aa). ATP-binding positions include leucine 22, arginine 23, glycine 64, lysine 67, threonine 68, threonine 69, 130–132, arginine 173, tyrosine 183, and arginine 220; that span reads EDY. Threonine 68 contacts Mg(2+). A small ATPAse domain (RuvB-S) region spans residues 184–254; that stretch reads TEEQLTEIVL…LAKEALTLLQ (71 aa). The interval 257–335 is head domain (RuvB-H); the sequence is PRGLDTIDQK…HLGISYEKEV (79 aa). Arginine 293, arginine 312, and arginine 317 together coordinate DNA.

Belongs to the RuvB family. Homohexamer. Forms an RuvA(8)-RuvB(12)-Holliday junction (HJ) complex. HJ DNA is sandwiched between 2 RuvA tetramers; dsDNA enters through RuvA and exits via RuvB. An RuvB hexamer assembles on each DNA strand where it exits the tetramer. Each RuvB hexamer is contacted by two RuvA subunits (via domain III) on 2 adjacent RuvB subunits; this complex drives branch migration. In the full resolvosome a probable DNA-RuvA(4)-RuvB(12)-RuvC(2) complex forms which resolves the HJ.

Its subcellular location is the cytoplasm. It carries out the reaction ATP + H2O = ADP + phosphate + H(+). In terms of biological role, the RuvA-RuvB-RuvC complex processes Holliday junction (HJ) DNA during genetic recombination and DNA repair, while the RuvA-RuvB complex plays an important role in the rescue of blocked DNA replication forks via replication fork reversal (RFR). RuvA specifically binds to HJ cruciform DNA, conferring on it an open structure. The RuvB hexamer acts as an ATP-dependent pump, pulling dsDNA into and through the RuvAB complex. RuvB forms 2 homohexamers on either side of HJ DNA bound by 1 or 2 RuvA tetramers; 4 subunits per hexamer contact DNA at a time. Coordinated motions by a converter formed by DNA-disengaged RuvB subunits stimulates ATP hydrolysis and nucleotide exchange. Immobilization of the converter enables RuvB to convert the ATP-contained energy into a lever motion, pulling 2 nucleotides of DNA out of the RuvA tetramer per ATP hydrolyzed, thus driving DNA branch migration. The RuvB motors rotate together with the DNA substrate, which together with the progressing nucleotide cycle form the mechanistic basis for DNA recombination by continuous HJ branch migration. Branch migration allows RuvC to scan DNA until it finds its consensus sequence, where it cleaves and resolves cruciform DNA. This Listeria monocytogenes serotype 4a (strain HCC23) protein is Holliday junction branch migration complex subunit RuvB.